The chain runs to 557 residues: Probable protein kinase UbiB (557 aa).

A Protein kinase domain is found at 121–509 (AFDTTPLASA…RKLQTRVVTA (389 aa)). ATP contacts are provided by residues 127-135 (LASASIAQV) and K154. Catalysis depends on D289, which acts as the Proton acceptor. 2 helical membrane passes run 506–526 (VVTA…YGLH) and 535–555 (VPVW…IAWL).

This sequence belongs to the ABC1 family. UbiB subfamily.

The protein localises to the cell inner membrane. The protein operates within cofactor biosynthesis; ubiquinone biosynthesis [regulation]. In terms of biological role, is probably a protein kinase regulator of UbiI activity which is involved in aerobic coenzyme Q (ubiquinone) biosynthesis. The protein is Probable protein kinase UbiB of Xanthomonas campestris pv. campestris (strain B100).